A 507-amino-acid polypeptide reads, in one-letter code: Protein adenylyltransferase fic-1 (507 aa).

Residues 40–56 (YSLTTVVLVSLVVTLVC) traverse the membrane as a helical segment. TPR repeat units lie at residues 146–179 (AILA…APNN) and 180–213 (PQIL…DPGN). An Inhibitory (S/T)XXXE(G/N) motif motif is present at residues 269–274 (TVAIEG). Glu273 is an ATP binding site. Positions 325–460 (ISIDDILEMH…LRPFVRYVAK (136 aa)) constitute a Fido domain. Residue Thr351 is modified to O-AMP-threonine; by autocatalysis. 356-359 (VGKF) serves as a coordination point for ATP. His403 is an active-site residue. ATP contacts are provided by residues 407 to 414 (DGNGRTAR), 439 to 440 (YY), and Asn447. An O-AMP-threonine; by autocatalysis modification is found at Thr475. Residues 482-507 (NGEEPNLTAEESKVSEKIETECRAGS) are disordered. Basic and acidic residues predominate over residues 491–507 (EESKVSEKIETECRAGS).

It belongs to the fic family. As to quaternary structure, forms homodimers; homodimerization might be required for adenylyltransferase activity.

The protein localises to the endoplasmic reticulum membrane. The protein resides in the nucleus membrane. The catalysed reaction is L-tyrosyl-[protein] + ATP = O-(5'-adenylyl)-L-tyrosyl-[protein] + diphosphate. The enzyme catalyses L-threonyl-[protein] + ATP = 3-O-(5'-adenylyl)-L-threonyl-[protein] + diphosphate. It carries out the reaction 3-O-(5'-adenylyl)-L-threonyl-[protein] + H2O = L-threonyl-[protein] + AMP + H(+). Its activity is regulated as follows. The side chain of Glu-273 determines which of the two opposing activities (AMPylase or de-AMPylase) will take place. In response to endoplasmic reticulum stress, mediates de-AMPylase activity. Adenylyltransferase activity is inhibited by the inhibitory helix present at the N-terminus: Glu-273 binds ATP and competes with ATP-binding at Arg-414, thereby preventing adenylyltransferase activity. In unstressed cells, disengagement of Glu-273 promotes adenylyltransferase activity. Activation dissociates ATP-binding from Glu-273, allowing ordered binding of the entire ATP moiety with the alpha-phosphate in an orientation that is productive for accepting an incoming target hydroxyl side chain. In terms of biological role, protein that can both mediate the addition of adenosine 5'-monophosphate (AMP) to specific residues of target proteins (AMPylation), and the removal of the same modification from target proteins (de-AMPylation), depending on the context. The side chain of Glu-273 determines which of the two opposing activities (AMPylase or de-AMPylase) will take place. Adenylyltransferase that mediates the addition of adenosine 5'-monophosphate (AMP) to specific residues of target proteins. In vivo target proteins include the heat-shock 70 family proteins hsp-1 and hsp-3 and the translation elongation factors eef-1A, eef-1G and eef-2. Can AMPylate core histone H3 in vitro. Can also act as a phosphodiesterase by mediating removal of ATP (de-AMPylation) from target proteins. Decreases susceptibility to P.aeruginosa-mediated killing and might therefore play a role in the innate immune response. The polypeptide is Protein adenylyltransferase fic-1 (fic-1) (Caenorhabditis briggsae).